Consider the following 2554-residue polypeptide: Protein sevenless (2554 aa).

Polar residues predominate over residues 1–10; the sequence is MTMFWQQNVD. The tract at residues 1 to 25 is disordered; it reads MTMFWQQNVDHQSDEQDKQAKGAAP. The Extracellular portion of the chain corresponds to 1-2123; sequence MTMFWQQNVD…AEPFVSPEKR (2123 aa). Basic and acidic residues predominate over residues 11–20; the sequence is HQSDEQDKQA. A glycan (N-linked (GlcNAc...) asparagine) is linked at N30. Over residues 51-70 the composition is skewed to low complexity; it reads NQQAPGTSSSSSNSQNASPS. The disordered stretch occupies residues 51–75; sequence NQQAPGTSSSSSNSQNASPSKIVVR. The N-linked (GlcNAc...) asparagine glycan is linked to N129. The interval 181-208 is disordered; it reads SRPQSTMAHHPDDRDRDRDPSEEQHGVD. Residues 189-208 are compositionally biased toward basic and acidic residues; sequence HHPDDRDRDRDPSEEQHGVD. In terms of domain architecture, Fibronectin type-III 1 spans 440–533; it reads APVIEHLMGL…GFVQTHSARN (94 aa). N-linked (GlcNAc...) asparagine glycosylation is found at N481, N505, N617, and N647. The region spanning 824–924 is the Fibronectin type-III 2 domain; that stretch reads AGGKPHSLKA…EPLAARTWPL (101 aa). N966 carries an N-linked (GlcNAc...) asparagine glycan. Residues 1010–1053 form an LDL-receptor class B repeat; sequence GRVYWTDLARNCVVRMDPWSGSRELLPVFEANFLALDPRQGHLY. 2 Fibronectin type-III domains span residues 1202–1290 and 1294–1397; these read LPDS…TPPV and QPRR…VAPE. N-linked (GlcNAc...) asparagine glycans are attached at residues N1228, N1313, N1353, N1550, N1557, N1639, N1725, N1756, N1804, N1889, N1947, and N2073. Fibronectin type-III domains are found at residues 1801–1901, 1902–1988, and 1995–2117; these read PPRN…SFAE, LPEL…VYET, and QPGK…AEPF. A helical transmembrane segment spans residues 2124 to 2147; it reads GSLVLAIIAPAAIVSSCVLALVLV. Over 2148-2554 the chain is Cytoplasmic; that stretch reads RKVQKRRLRA…LYANEGVSRL (407 aa). In terms of domain architecture, Protein kinase spans 2209-2485; the sequence is LKLLRFLGSG…RCYNTLHAIS (277 aa). ATP-binding positions include 2215–2223 and K2242; that span reads LGSGAFGEV. D2343 functions as the Proton acceptor in the catalytic mechanism. Phosphotyrosine; by autocatalysis is present on Y2380. Positions 2515 to 2527 are enriched in basic and acidic residues; sequence GQPLEEHREHNER. Positions 2515-2534 are disordered; sequence GQPLEEHREHNERPEDENLT.

The protein belongs to the protein kinase superfamily. Tyr protein kinase family. Insulin receptor subfamily. May form a complex with drk and Sos. Binds the phosphotyrosine interaction domain (PID) of Dab.

The protein resides in the cell membrane. The enzyme catalyses L-tyrosyl-[protein] + ATP = O-phospho-L-tyrosyl-[protein] + ADP + H(+). Receptor for an extracellular signal required to instruct a cell to differentiate into an R7 photoreceptor. The ligand for sev is the boss (bride of sevenless) protein on the surface of the neighboring R8 cell. This is Protein sevenless (sev) from Drosophila melanogaster (Fruit fly).